Reading from the N-terminus, the 408-residue chain is GDSL esterase/lipase At1g54790 (408 aa).

The first 24 residues, 1-24, serve as a signal peptide directing secretion; the sequence is MNITKMKLFYVILFFISSLQISNS. S38 (nucleophile) is an active-site residue. N-linked (GlcNAc...) asparagine glycans are attached at residues N273, N289, and N361. Catalysis depends on residues D370 and H373.

Belongs to the 'GDSL' lipolytic enzyme family.

The protein localises to the secreted. This is GDSL esterase/lipase At1g54790 from Arabidopsis thaliana (Mouse-ear cress).